The primary structure comprises 288 residues: Phosphatidylserine decarboxylase proenzyme (288 aa).

Residues Asp88, His145, and Ser248 each act as charge relay system; for autoendoproteolytic cleavage activity in the active site. The active-site Schiff-base intermediate with substrate; via pyruvic acid; for decarboxylase activity is the Ser248. Ser248 carries the post-translational modification Pyruvic acid (Ser); by autocatalysis.

This sequence belongs to the phosphatidylserine decarboxylase family. PSD-B subfamily. Prokaryotic type I sub-subfamily. In terms of assembly, heterodimer of a large membrane-associated beta subunit and a small pyruvoyl-containing alpha subunit. Pyruvate serves as cofactor. In terms of processing, is synthesized initially as an inactive proenzyme. Formation of the active enzyme involves a self-maturation process in which the active site pyruvoyl group is generated from an internal serine residue via an autocatalytic post-translational modification. Two non-identical subunits are generated from the proenzyme in this reaction, and the pyruvate is formed at the N-terminus of the alpha chain, which is derived from the carboxyl end of the proenzyme. The autoendoproteolytic cleavage occurs by a canonical serine protease mechanism, in which the side chain hydroxyl group of the serine supplies its oxygen atom to form the C-terminus of the beta chain, while the remainder of the serine residue undergoes an oxidative deamination to produce ammonia and the pyruvoyl prosthetic group on the alpha chain. During this reaction, the Ser that is part of the protease active site of the proenzyme becomes the pyruvoyl prosthetic group, which constitutes an essential element of the active site of the mature decarboxylase.

It is found in the cell membrane. The catalysed reaction is a 1,2-diacyl-sn-glycero-3-phospho-L-serine + H(+) = a 1,2-diacyl-sn-glycero-3-phosphoethanolamine + CO2. The protein operates within phospholipid metabolism; phosphatidylethanolamine biosynthesis; phosphatidylethanolamine from CDP-diacylglycerol: step 2/2. Its function is as follows. Catalyzes the formation of phosphatidylethanolamine (PtdEtn) from phosphatidylserine (PtdSer). This chain is Phosphatidylserine decarboxylase proenzyme, found in Azoarcus sp. (strain BH72).